The following is a 658-amino-acid chain: Zinc finger protein 135 (658 aa).

In terms of domain architecture, KRAB spans 14 to 85 (VTFEDVVVGF…ESRLPQGVYP (72 aa)). Positions 171–196 (LNPDLPHQPMTPERQSPHTWGTRGKR) are disordered. 16 consecutive C2H2-type zinc fingers follow at residues 214-236 (YKCQ…HRTH), 242-264 (YECH…QRIH), 270-292 (YKCT…QRTH), 298-320 (YECS…ERTH), 326-348 (YECS…LRIH), 354-376 (YQCG…QRIH), 382-404 (YECH…QRTH), 410-432 (YECG…RRIH), 438-460 (YGCN…ERTH), 466-488 (YECS…QRIH), 494-516 (YECN…QRIH), 522-544 (YECN…QRIH), 550-572 (YECN…QRIH), 578-600 (YGCN…ERTH), 606-628 (YECH…RRIH), and 634-656 (YACR…QRTH).

This sequence belongs to the krueppel C2H2-type zinc-finger protein family.

Its subcellular location is the nucleus. In terms of biological role, plays a role in the regulation of cell morphology and cytoskeletal organization. May be involved in transcriptional regulation. This is Zinc finger protein 135 (ZNF135) from Homo sapiens (Human).